A 548-amino-acid chain; its full sequence is Glucose-6-phosphate isomerase (548 aa).

Glu353 (proton donor) is an active-site residue. Residues His384 and Lys512 contribute to the active site.

Belongs to the GPI family.

The protein localises to the cytoplasm. It catalyses the reaction alpha-D-glucose 6-phosphate = beta-D-fructose 6-phosphate. The protein operates within carbohydrate biosynthesis; gluconeogenesis. It participates in carbohydrate degradation; glycolysis; D-glyceraldehyde 3-phosphate and glycerone phosphate from D-glucose: step 2/4. Functionally, catalyzes the reversible isomerization of glucose-6-phosphate to fructose-6-phosphate. The polypeptide is Glucose-6-phosphate isomerase (Chlorobium chlorochromatii (strain CaD3)).